The sequence spans 530 residues: Cytochrome P450 monooxygenase aneG (530 aa).

N-linked (GlcNAc...) asparagine glycosylation is present at Asn2. The chain crosses the membrane as a helical span at residues 43–63 (WLSILGFTIGCYYVIYTFYAL). An N-linked (GlcNAc...) asparagine glycan is attached at Asn92. A heme-binding site is contributed by Cys474.

The protein belongs to the cytochrome P450 family. Requires heme as cofactor.

It is found in the membrane. It carries out the reaction asperaculane E + reduced [NADPH--hemoprotein reductase] + O2 = asperaculane G + oxidized [NADPH--hemoprotein reductase] + H2O + H(+). It catalyses the reaction asperaculane G + reduced [NADPH--hemoprotein reductase] + O2 = aculene D + oxidized [NADPH--hemoprotein reductase] + CO2 + 2 H2O. The catalysed reaction is asperaculane E + 2 reduced [NADPH--hemoprotein reductase] + 2 O2 = aculene D + 2 oxidized [NADPH--hemoprotein reductase] + CO2 + 3 H2O + H(+). It functions in the pathway secondary metabolite biosynthesis. Its function is as follows. Cytochrome P450 monooxygenase; part of the gene cluster that mediates the biosynthesis of aculenes, a unique type of norsesquiterpenes that contain a nordaucane skeleton linked to an L-proline moiety and are of mixed biosynthetic origin. The pathway begins with the synthesis of dauca-4,7-diene by the terpene cyclase aneC using farnesyl pyrophosphate (FPP) as substrate. The cytochrome P450 monooxygenase aneF then performs the initial oxidation at C-12 of dauca-4,7-diene to yield asperaculane D. Asperaculane D is substrate of the cytochrome P450 monooxygenase aneD for C-10 hydroxylation to yield asperaculane E. The cytochrome P450 monooxygenase aneG then converts asperaculane E into aculene D via C-2 oxidation. The monomodular nonribosomal peptide synthtase aneB adenylates L-proline and the thiohydrolase aneE transfers this activated L-proline derivative to aculenes D and C to produce respectively aculenes B and A. The dioxygenase aneA converts aculene D into aculene C, and aculene B into aculene A by introducing the 5,6-alkene moiety. Asperculanes A, B, C and F, as well as 14-prolyl asperculane C, might be shunt products of the pathway. This chain is Cytochrome P450 monooxygenase aneG, found in Aspergillus aculeatus (strain ATCC 16872 / CBS 172.66 / WB 5094).